Reading from the N-terminus, the 383-residue chain is Spermidine/putrescine import ATP-binding protein PotA (383 aa).

The ABC transporter domain occupies 12-246; the sequence is IALRDISKVY…PSTPFVAGFI (235 aa). 48-55 is a binding site for ATP; sequence GPSGCGKT.

This sequence belongs to the ABC transporter superfamily. Spermidine/putrescine importer (TC 3.A.1.11.1) family. In terms of assembly, the complex is composed of two ATP-binding proteins (PotA), two transmembrane proteins (PotB and PotC) and a solute-binding protein (PotD).

It is found in the cell membrane. The enzyme catalyses ATP + H2O + polyamine-[polyamine-binding protein]Side 1 = ADP + phosphate + polyamineSide 2 + [polyamine-binding protein]Side 1.. Part of the ABC transporter complex PotABCD involved in spermidine/putrescine import. Responsible for energy coupling to the transport system. This chain is Spermidine/putrescine import ATP-binding protein PotA, found in Acidothermus cellulolyticus (strain ATCC 43068 / DSM 8971 / 11B).